The sequence spans 233 residues: Purine nucleoside phosphorylase DeoD-type (233 aa).

His4 lines the a purine D-ribonucleoside pocket. Phosphate contacts are provided by residues Gly20, Arg24, Arg43, and 87 to 90; that span reads RIGT. A purine D-ribonucleoside-binding positions include 179–181 and 203–204; these read EME and SD. Residue Asp204 is the Proton donor of the active site.

The protein belongs to the PNP/UDP phosphorylase family. As to quaternary structure, homohexamer; trimer of homodimers.

It carries out the reaction a purine D-ribonucleoside + phosphate = a purine nucleobase + alpha-D-ribose 1-phosphate. The enzyme catalyses a purine 2'-deoxy-D-ribonucleoside + phosphate = a purine nucleobase + 2-deoxy-alpha-D-ribose 1-phosphate. Functionally, catalyzes the reversible phosphorolytic breakdown of the N-glycosidic bond in the beta-(deoxy)ribonucleoside molecules, with the formation of the corresponding free purine bases and pentose-1-phosphate. The chain is Purine nucleoside phosphorylase DeoD-type from Helicobacter acinonychis (strain Sheeba).